The chain runs to 1374 residues: MAQTSTYSYTERKRIRKSFGSRDSVLKVPYLLQMQRDAYTAFLQADTAPQKRSIEGLQAAFNSAFPIVSHNGFVEMKFVEYNLAKPAFDVRECQTRGLTFASAVRAKVQLIIYDRESSTSQSKVVKEVKEQEVYMGEVPLMTDKGSFIINGTERVIVSQLHRSPGVFFEHDKGKTHSSGKLLFSARIIPYRGSWLDFEFDPKDILYFRVDRRRKMPVTILLKAIGLNPESILANFFVNDNFRLMDSGAQLEFVPERLRGEVARFDITDKAGKVIVAKDKRVTARHTRELEQSGTTHISVPEDFLIGRVVARNIVDGDTGEILAKANEELTEALLKKLRAAGVQDLQVIYTNELDQGAYISQTLRIDETVDEFAARVAIYRMMRPGEPPTEDAVQALFQRLFYNPDTYDLSRVGRMKFNAKIGRDEATGPMVLSNDDILAVVKILVDLRNGKGEVDDIDHLGNRRVRCVGELAENQYRTGLARIEKAVKERLGQAEQEPLMPHDLINSKPISAALKEFFGASQLSQFMDQTNPLAEITHKRRVSALGPGGLTRERAGFEVRDVHVTHYGRVCPIETPEGPNIGLINSLALYARLNEYGFIETPYRRVVDGKVTMEIDYLSAIEEGKYIIAQANATLDAEGRLTGDLVSAREKGESTLVSADRVQYMDVSPAQIVSVAASLVPFLEHDDANRALMGANMSRQAVPVLRPEKPMVGTGIERVAAVDSGTVVTANRGGVVDYVDATRIVVRVNDDEAVAGEVGVDIYNLIKYQRSNQNTNIHQRPIVKKGDKLAKGDVIADGASTDLGEIAIGQNMLIAFMPWNGYNFEDSILISERVVAEDRYTSIHIEELVVMARDTKLGAEEITRDIPNLSEQQLNRLDESGIIYVGAEVQPGDTLVGKVTPKGETTLTPEEKLLRAIFGEKASDVKDTSLRVDQGSQGTVIDVQVFTREGIQRDKRAQQIIDDELKRFRLDLNDQLRIVEADAFDRIEKLLTGRVANGGPQKLAKGTKIDKAYLASVEKFHWFDIRPAEEEVATQLESIKNALEQTRHSFDLAFEEKRKKLTQGDELPAGVLKMVKVYLAVKRRLQPGDKMAGRHGNKGVVSKIVPVEDMPYMADGTPADIVLNPLGVPSRMNIGQVLEVHLGWAGKGMGQRIGDMLQREAKTAELRKFLEEIYNSRGRKEELSQLSDDEILAMARELTSGVPFASPVFDGASEEEIKDMLKLAYPDDLAQAKGLTETRTQAYLYDGRTGERFERPTTVGYMHYLKLHHLVDDKMHARSTGPYSLVTQQPLGGKAQFGGQRFGEMEVWALEAYGAAYVLQEMLTVKSDDVQGRTKVYENIVKGEHAIEAGMPESFNVLVKEIRSLGLDIELERS.

The protein belongs to the RNA polymerase beta chain family. In terms of assembly, the RNAP catalytic core consists of 2 alpha, 1 beta, 1 beta' and 1 omega subunit. When a sigma factor is associated with the core the holoenzyme is formed, which can initiate transcription.

It carries out the reaction RNA(n) + a ribonucleoside 5'-triphosphate = RNA(n+1) + diphosphate. Functionally, DNA-dependent RNA polymerase catalyzes the transcription of DNA into RNA using the four ribonucleoside triphosphates as substrates. In Acidovorax ebreus (strain TPSY) (Diaphorobacter sp. (strain TPSY)), this protein is DNA-directed RNA polymerase subunit beta.